The chain runs to 345 residues: Adenylosuccinate synthetase (345 aa).

Residues 18 to 24 (GDEGKGK) and 48 to 50 (GHT) contribute to the GTP site. The active-site Proton acceptor is the Asp-19. Asp-19 and Gly-48 together coordinate Mg(2+). IMP-binding positions include 19–22 (DEGK), 46–49 (NAGH), Thr-133, Arg-147, Gln-185, Thr-200, and Arg-262. Residue His-49 is the Proton donor of the active site. 258–264 (TVTGRRR) contacts substrate. GTP contacts are provided by residues Arg-264, 290 to 292 (GLD), and 330 to 332 (STG).

This sequence belongs to the adenylosuccinate synthetase family. In terms of assembly, homodimer. The cofactor is Mg(2+).

It localises to the cytoplasm. The catalysed reaction is IMP + L-aspartate + GTP = N(6)-(1,2-dicarboxyethyl)-AMP + GDP + phosphate + 2 H(+). The protein operates within purine metabolism; AMP biosynthesis via de novo pathway; AMP from IMP: step 1/2. Its function is as follows. Plays an important role in the de novo pathway of purine nucleotide biosynthesis. Catalyzes the first committed step in the biosynthesis of AMP from IMP. In Methanocaldococcus jannaschii (strain ATCC 43067 / DSM 2661 / JAL-1 / JCM 10045 / NBRC 100440) (Methanococcus jannaschii), this protein is Adenylosuccinate synthetase.